Reading from the N-terminus, the 397-residue chain is MIGDVLPTTPNESPNWHRLRRAIRSTWPNRHGRSSDVATLVGCSGGADSVALICLLAELWAEESNGLNPANETVTKPVAPLVVAHCNHGLRGEESNADEAFVRQICDQLQLPLVIHHVPPLNNSATSGPVSDERTLRQIRRDFFERAAKQHGCRYVAVAHSADDQAETMLHHFIRGTGPLGLAGIAEASELDTDIVVRRPLLQVRRDTLRDGLREIGQPWREDASNRHTIYTRNWIRHDVLPLIESRYPNAVEAIHRAGTLQHEMNEMVRRLAERWLEAFTDFSGDRWTIHTERLSKSATPEKRMDDTNAACSWMIERPVIVAASQLAWDRLGWSRGSMTMQHWQRLTGLINDQSCWHTSDIDVSTSQAVDGIDHGGHFPGGICLSVEAKQLVLRSE.

44 to 49 is an ATP binding site; that stretch reads SGGADS.

Belongs to the tRNA(Ile)-lysidine synthase family.

It localises to the cytoplasm. It catalyses the reaction cytidine(34) in tRNA(Ile2) + L-lysine + ATP = lysidine(34) in tRNA(Ile2) + AMP + diphosphate + H(+). Its function is as follows. Ligates lysine onto the cytidine present at position 34 of the AUA codon-specific tRNA(Ile) that contains the anticodon CAU, in an ATP-dependent manner. Cytidine is converted to lysidine, thus changing the amino acid specificity of the tRNA from methionine to isoleucine. The sequence is that of tRNA(Ile)-lysidine synthase from Rhodopirellula baltica (strain DSM 10527 / NCIMB 13988 / SH1).